We begin with the raw amino-acid sequence, 1355 residues long: Collagen alpha-2(I) chain (1355 aa).

A signal peptide spans 1–22 (MLSFVDLRSVLLLAVTLYLVTC). Glutamine 23 is modified (pyrrolidone carboxylic acid). The propeptide at 23–71 (QEVRRGPRGDKGPPGEQGPPGIPGRDGEDGLPGLPGPPGVPGLGGNFAA) is N-terminal propeptide. Over residues 26 to 35 (RRGPRGDKGP) the composition is skewed to basic and acidic residues. A disordered region spans residues 26–1111 (RRGPRGDKGP…GDGGEYYRAD (1086 aa)). A Pyrrolidone carboxylic acid modification is found at glutamine 72. At lysine 77 the chain carries Allysine. Residues 99–108 (PGSQGFQGLP) show a composition bias toward low complexity. The span at 132–146 (AGEDGHPGKSGRPGE) shows a compositional bias: basic and acidic residues. Lysine 168 carries the post-translational modification 5-hydroxylysine; alternate. An O-linked (Gal...) hydroxylysine; alternate glycan is attached at lysine 168. Over residues 218-267 (PAGSAGSRGSDGSSGPVGPAGPIGSAGAPGLPGAPGAKGELGPAGNNGPT) the composition is skewed to low complexity. The segment covering 276–290 (PGPPGSLGPAGPPGN) has biased composition (pro residues). Residues 291 to 303 (PGTNGVNGAKGTA) show a composition bias toward low complexity. A compositionally biased stretch (gly residues) spans 304–322 (GLPGVGGAPGLPGGRGIPG). The span at 327–336 (AGPSGARGLA) shows a compositional bias: low complexity. Gly residues-rich tracts occupy residues 340 to 349 (GIAGGKGDTG) and 403 to 412 (GRAGGIGPAG). Low complexity-rich tracts occupy residues 413–426 (SRGS…RGPN) and 465–495 (EGRS…NGEP). Gly residues-rich tracts occupy residues 523 to 532 (GPAGLGGATG) and 586 to 595 (GESGGAGPHG). The span at 596-618 (PSGSRGPSGAPGPDGQKGEPGAA) shows a compositional bias: low complexity. Residues 619 to 628 (GLNGGLGPSG) show a composition bias toward gly residues. Composition is skewed to low complexity over residues 659–675 (NPGR…AGAP), 687–701 (SGPA…PRGA), and 708–726 (AGPA…AGHT). Residues 728–738 (AKGDRGAKGPK) show a composition bias toward basic and acidic residues. Composition is skewed to low complexity over residues 741 to 767 (AGSP…STGA) and 776 to 788 (ATGF…RAGA). The segment covering 804-813 (PGKDGSRGPR) has biased composition (basic and acidic residues). Low complexity predominate over residues 852-869 (AGPSGVLGARGILGLPGT). Gly residues predominate over residues 874-883 (GLPGGPGSNG). 2 stretches are compositionally biased toward low complexity: residues 884-912 (EPGP…VGHS) and 947-966 (PSGL…AGKS). Residues 967-976 (GNRGEGGPSG) show a composition bias toward gly residues. Basic and acidic residues predominate over residues 996–1014 (RGDKGEAGERGARGLDGRK). A compositionally biased stretch (low complexity) spans 1019-1041 (LSGLPGPSGTPGETGPSGSVGPV). Pro residues predominate over residues 1080–1091 (AGPPGPPGPPGH). Residues 1093 to 1105 (GPSGGGYDGGDGG) show a composition bias toward gly residues. Positions 1111 to 1355 (DQPERKPKDY…GFEIGPVCFK (245 aa)) are cleaved as a propeptide — C-terminal propeptide. A Fibrillar collagen NC1 domain is found at 1120–1355 (YEVDATLKSL…GFEIGPVCFK (236 aa)). 3 disulfide bridges follow: cysteine 1150–cysteine 1182, cysteine 1190–cysteine 1353, and cysteine 1261–cysteine 1306. 5 residues coordinate Ca(2+): aspartate 1168, asparagine 1170, glutamine 1171, cysteine 1173, and aspartate 1176. 2 N-linked (GlcNAc...) asparagine glycosylation sites follow: asparagine 1206 and asparagine 1256.

Belongs to the fibrillar collagen family. Trimers of one alpha 2(I) and two alpha 1(I) chains. Prolines at the third position of the tripeptide repeating unit (G-X-Y) are hydroxylated in some or all of the chains. As to expression, forms the fibrils of tendon, ligaments and bones. In bones the fibrils are mineralized with calcium hydroxyapatite.

It localises to the secreted. The protein localises to the extracellular space. It is found in the extracellular matrix. Type I collagen is a member of group I collagen (fibrillar forming collagen). This Aquarana catesbeiana (American bullfrog) protein is Collagen alpha-2(I) chain (COL1A2).